A 139-amino-acid polypeptide reads, in one-letter code: Nucleoside diphosphate kinase (139 aa).

K11, F59, R87, T93, R104, and N114 together coordinate ATP. The active-site Pros-phosphohistidine intermediate is the H117.

Belongs to the NDK family. As to quaternary structure, homotetramer. Requires Mg(2+) as cofactor.

Its subcellular location is the cytoplasm. The enzyme catalyses a 2'-deoxyribonucleoside 5'-diphosphate + ATP = a 2'-deoxyribonucleoside 5'-triphosphate + ADP. The catalysed reaction is a ribonucleoside 5'-diphosphate + ATP = a ribonucleoside 5'-triphosphate + ADP. In terms of biological role, major role in the synthesis of nucleoside triphosphates other than ATP. The ATP gamma phosphate is transferred to the NDP beta phosphate via a ping-pong mechanism, using a phosphorylated active-site intermediate. The sequence is that of Nucleoside diphosphate kinase from Pasteurella multocida (strain Pm70).